We begin with the raw amino-acid sequence, 368 residues long: Ubl carboxyl-terminal hydrolase 18 (368 aa).

The mediates interaction with IFNAR2 stretch occupies residues 31–48; it reads MKRKRVLSRDLCSAWDSP. The segment at 48–109 is mediates interaction with STAT2; that stretch reads PHGLVGLHNI…LLLLLEKMQD (62 aa). The 315-residue stretch at 52–366 folds into the USP domain; it reads VGLHNIGQTC…TAYLLVYTKT (315 aa). Residue Cys-61 is the Nucleophile of the active site. The interval 299-308 is mediates interaction with STAT2 and necessary for the negative regulation of the type I IFN signaling pathway; sequence ELFAVIAHVG. The mediates interaction with IFNAR2 stretch occupies residues 309 to 368; it reads MADFGHYCAYIRNPVDGKWFCFNDSHVCWVTWKDVQCTYGNHRYRWRETAYLLVYTKTGS. Catalysis depends on His-314, which acts as the Proton acceptor.

The protein belongs to the peptidase C19 family. As to quaternary structure, interacts with STAT2; the interaction is direct. Interacts with IFNAR2; indirectly via STAT2, it negatively regulates the assembly of the ternary interferon-IFNAR1-IFNAR2 complex and inhibits type I interferon signaling. Interacts with STING1. Interacts with USP20.

It carries out the reaction Thiol-dependent hydrolysis of ester, thioester, amide, peptide and isopeptide bonds formed by the C-terminal Gly of ubiquitin (a 76-residue protein attached to proteins as an intracellular targeting signal).. Functionally, interferon-induced ISG15-specific protease that plays a crucial role for maintaining a proper balance of ISG15-conjugated proteins in cells. Regulates protein ISGylation by efficiently cleaving ISG15 conjugates linked via isopeptide bonds. Regulates T-cell activation and T-helper 17 (Th17) cell differentiation by deubiquitinating TAK1, likely to keep TAK1-TAB complexes in steady conditions. In turn, restricts activation of NF-kappa-B, NFAT, and JNK as well as expression of IL2 in T-cells after TCR activation. Acts as a molecular adapter with USP20 to promote innate antiviral response through deubiquitinating STING1. Involved also in the negative regulation of the inflammatory response triggered by type I interferon. Upon recruitment by STAT2 to the type I interferon receptor subunit IFNAR2 interferes with the assembly of the ternary interferon-IFNAR1-IFNAR2 complex and acts as a negative regulator of the type I interferon signaling pathway. This chain is Ubl carboxyl-terminal hydrolase 18 (Usp18), found in Mus musculus (Mouse).